We begin with the raw amino-acid sequence, 417 residues long: NADH-quinone oxidoreductase subunit D (417 aa).

Belongs to the complex I 49 kDa subunit family. In terms of assembly, NDH-1 is composed of 14 different subunits. Subunits NuoB, C, D, E, F, and G constitute the peripheral sector of the complex.

It is found in the cell inner membrane. It catalyses the reaction a quinone + NADH + 5 H(+)(in) = a quinol + NAD(+) + 4 H(+)(out). Its function is as follows. NDH-1 shuttles electrons from NADH, via FMN and iron-sulfur (Fe-S) centers, to quinones in the respiratory chain. The immediate electron acceptor for the enzyme in this species is believed to be ubiquinone. Couples the redox reaction to proton translocation (for every two electrons transferred, four hydrogen ions are translocated across the cytoplasmic membrane), and thus conserves the redox energy in a proton gradient. This is NADH-quinone oxidoreductase subunit D from Aromatoleum aromaticum (strain DSM 19018 / LMG 30748 / EbN1) (Azoarcus sp. (strain EbN1)).